We begin with the raw amino-acid sequence, 235 residues long: Centromere protein H (235 aa).

The interval 1–23 (MAGRLSESVGSGPGAEAETAADP) is disordered. Positions 125 to 145 (EIIQAHQQARVIRENLNDIRR) form a coiled coil.

This sequence belongs to the CENP-H/MCM16 family. Component of the CENPA-HI complex, at least composed of CENPH, CENPI, CENPK, CENPL, CENPM, CENPO and CENPP. Interacts with NDC80.

It is found in the nucleus. It localises to the chromosome. Its subcellular location is the centromere. The protein resides in the kinetochore. Functionally, component of the CENPA-HI complex, a centromeric complex involved in assembly of kinetochore proteins, mitotic progression and chromosome segregation. Required for the localization of CENPC but not CENPA to the centromere. It however may be involved in incorporation of newly synthesized CENPA into centromeres via its interaction with the CENPA-NAC complex. The sequence is that of Centromere protein H (CENPH) from Gallus gallus (Chicken).